Reading from the N-terminus, the 397-residue chain is Serpin B10 (397 aa).

A Nuclear localization signal motif is present at residues 74–77; sequence KKRK.

This sequence belongs to the serpin family. Ov-serpin subfamily.

It is found in the nucleus. Its subcellular location is the cytoplasm. Functionally, protease inhibitor that may play a role in the regulation of protease activities during hematopoiesis and apoptosis induced by TNF. May regulate protease activities in the cytoplasm and in the nucleus. This is Serpin B10 (SERPINB10) from Sorex araneus (Eurasian common shrew).